Here is a 195-residue protein sequence, read N- to C-terminus: Sec-independent protein translocase protein TatB (195 aa).

Residues 2 to 22 form a helical membrane-spanning segment; the sequence is FSNVGWGEVLVLLIVALFLIG. A compositionally biased stretch (basic and acidic residues) spans 103–125; sequence VKDTVDTVRKPNLRESLKADKTK. Residues 103 to 195 are disordered; it reads VKDTVDTVRK…APGYGWEDVT (93 aa). Composition is skewed to polar residues over residues 127-139 and 146-155; these read SAQPQPSLASGSA and VTQQSNAGES.

It belongs to the TatB family. As to quaternary structure, the Tat system comprises two distinct complexes: a TatABC complex, containing multiple copies of TatA, TatB and TatC subunits, and a separate TatA complex, containing only TatA subunits. Substrates initially bind to the TatABC complex, which probably triggers association of the separate TatA complex to form the active translocon.

Its subcellular location is the cell membrane. Functionally, part of the twin-arginine translocation (Tat) system that transports large folded proteins containing a characteristic twin-arginine motif in their signal peptide across membranes. Together with TatC, TatB is part of a receptor directly interacting with Tat signal peptides. TatB may form an oligomeric binding site that transiently accommodates folded Tat precursor proteins before their translocation. The polypeptide is Sec-independent protein translocase protein TatB (Corynebacterium jeikeium (strain K411)).